The chain runs to 379 residues: Queuine tRNA-ribosyltransferase (379 aa).

D94 functions as the Proton acceptor in the catalytic mechanism. Substrate-binding positions include 94–98 (DSGGF), D148, Q191, and G218. Residues 249-255 (GVGSPDS) are RNA binding. D268 acts as the Nucleophile in catalysis. Positions 273-277 (TRIAR) are RNA binding; important for wobble base 34 recognition. Residues C306, C308, C311, and H337 each coordinate Zn(2+).

The protein belongs to the queuine tRNA-ribosyltransferase family. As to quaternary structure, homodimer. Within each dimer, one monomer is responsible for RNA recognition and catalysis, while the other monomer binds to the replacement base PreQ1. Zn(2+) is required as a cofactor.

The enzyme catalyses 7-aminomethyl-7-carbaguanine + guanosine(34) in tRNA = 7-aminomethyl-7-carbaguanosine(34) in tRNA + guanine. It functions in the pathway tRNA modification; tRNA-queuosine biosynthesis. Its function is as follows. Catalyzes the base-exchange of a guanine (G) residue with the queuine precursor 7-aminomethyl-7-deazaguanine (PreQ1) at position 34 (anticodon wobble position) in tRNAs with GU(N) anticodons (tRNA-Asp, -Asn, -His and -Tyr). Catalysis occurs through a double-displacement mechanism. The nucleophile active site attacks the C1' of nucleotide 34 to detach the guanine base from the RNA, forming a covalent enzyme-RNA intermediate. The proton acceptor active site deprotonates the incoming PreQ1, allowing a nucleophilic attack on the C1' of the ribose to form the product. After dissociation, two additional enzymatic reactions on the tRNA convert PreQ1 to queuine (Q), resulting in the hypermodified nucleoside queuosine (7-(((4,5-cis-dihydroxy-2-cyclopenten-1-yl)amino)methyl)-7-deazaguanosine). This chain is Queuine tRNA-ribosyltransferase, found in Bacillus cytotoxicus (strain DSM 22905 / CIP 110041 / 391-98 / NVH 391-98).